A 488-amino-acid polypeptide reads, in one-letter code: GTPase Der (488 aa).

2 EngA-type G domains span residues 3-166 (PVVA…AEAM) and 199-372 (IKLA…DSAT). Residues 9-16 (GRPNVGKS), 56-60 (DTGGI), 118-121 (NKID), 205-212 (GKPNVGKS), 252-256 (DTAGV), and 317-320 (NKWD) each bind GTP. One can recognise a KH-like domain in the interval 373–457 (RRVSTSMLTR…PIQLRFQEGD (85 aa)).

The protein belongs to the TRAFAC class TrmE-Era-EngA-EngB-Septin-like GTPase superfamily. EngA (Der) GTPase family. As to quaternary structure, associates with the 50S ribosomal subunit.

GTPase that plays an essential role in the late steps of ribosome biogenesis. The sequence is that of GTPase Der from Shewanella sp. (strain MR-7).